Here is a 423-residue protein sequence, read N- to C-terminus: UDP-N-acetylglucosamine 1-carboxyvinyltransferase (423 aa).

A phosphoenolpyruvate-binding site is contributed by 22–23 (KN). Arg98 contributes to the UDP-N-acetyl-alpha-D-glucosamine binding site. Cys122 (proton donor) is an active-site residue. Residue Cys122 is modified to 2-(S-cysteinyl)pyruvic acid O-phosphothioketal. UDP-N-acetyl-alpha-D-glucosamine-binding positions include 127-131 (RPVDQ), Asp311, and Ile333.

It belongs to the EPSP synthase family. MurA subfamily.

The protein localises to the cytoplasm. The enzyme catalyses phosphoenolpyruvate + UDP-N-acetyl-alpha-D-glucosamine = UDP-N-acetyl-3-O-(1-carboxyvinyl)-alpha-D-glucosamine + phosphate. It functions in the pathway cell wall biogenesis; peptidoglycan biosynthesis. Functionally, cell wall formation. Adds enolpyruvyl to UDP-N-acetylglucosamine. The sequence is that of UDP-N-acetylglucosamine 1-carboxyvinyltransferase from Stenotrophomonas maltophilia (strain K279a).